Reading from the N-terminus, the 905-residue chain is Protein translocase subunit SecA (905 aa).

ATP-binding positions include Gln89, 107–111 (GEGKT), and Asp502. Zn(2+)-binding residues include Cys887, Cys889, Cys898, and His899.

This sequence belongs to the SecA family. Monomer and homodimer. Part of the essential Sec protein translocation apparatus which comprises SecA, SecYEG and auxiliary proteins SecDF-YajC and YidC. Zn(2+) is required as a cofactor.

Its subcellular location is the cell inner membrane. It localises to the cytoplasm. It carries out the reaction ATP + H2O + cellular proteinSide 1 = ADP + phosphate + cellular proteinSide 2.. In terms of biological role, part of the Sec protein translocase complex. Interacts with the SecYEG preprotein conducting channel. Has a central role in coupling the hydrolysis of ATP to the transfer of proteins into and across the cell membrane, serving both as a receptor for the preprotein-SecB complex and as an ATP-driven molecular motor driving the stepwise translocation of polypeptide chains across the membrane. This is Protein translocase subunit SecA from Rhizobium leguminosarum bv. trifolii (strain WSM2304).